We begin with the raw amino-acid sequence, 374 residues long: MNYPLTLDMGSITYNMDDLYKELAFYSNSTEIPLQDSNFCSTVEGPLLTSFKAVFMPVAYSLIFLLGMMGNILVLVILERHRHTRSSTETFLFHLAVADLLLVFILPFAVAEGSVGWVLGTFLCKTVIALHKINFYCSSLLLACIAVDRYLAIVHAVHAYRRRRLLSIHITCTAIWLAGFLFALPELLFAKVGQPHNNDSLPQCTFSQENEAETRAWFTSRFLYHIGGFLLPMLVMGWCYVGVVHRLLQAQRRPQRQKAVRVAILVTSIFFLCWSPYHIVIFLDTLERLKAVNSSCELSGYLSVAITLCEFLGLAHCCLNPMLYTFAGVKFRSDLSRLLTKLGCAGPASLCQLFPNWRKSSLSESENATSLTTF.

Residues 1 to 57 (MNYPLTLDMGSITYNMDDLYKELAFYSNSTEIPLQDSNFCSTVEGPLLTSFKAVFMP) are Extracellular-facing. Asparagine 28 carries an N-linked (GlcNAc...) asparagine glycan. Residues 58–78 (VAYSLIFLLGMMGNILVLVIL) traverse the membrane as a helical segment. Topologically, residues 79–90 (ERHRHTRSSTET) are cytoplasmic. Residues 91–111 (FLFHLAVADLLLVFILPFAVA) traverse the membrane as a helical segment. Residues 112–126 (EGSVGWVLGTFLCKT) lie on the Extracellular side of the membrane. A disulfide bridge connects residues cysteine 124 and cysteine 204. Residues 127-147 (VIALHKINFYCSSLLLACIAV) form a helical membrane-spanning segment. The Cytoplasmic segment spans residues 148–169 (DRYLAIVHAVHAYRRRRLLSIH). Residues 170-190 (ITCTAIWLAGFLFALPELLFA) form a helical membrane-spanning segment. At 191–221 (KVGQPHNNDSLPQCTFSQENEAETRAWFTSR) the chain is on the extracellular side. Residue asparagine 198 is glycosylated (N-linked (GlcNAc...) asparagine). The chain crosses the membrane as a helical span at residues 222–242 (FLYHIGGFLLPMLVMGWCYVG). At 243-261 (VVHRLLQAQRRPQRQKAVR) the chain is on the cytoplasmic side. The helical transmembrane segment at 262 to 282 (VAILVTSIFFLCWSPYHIVIF) threads the bilayer. The Extracellular portion of the chain corresponds to 283 to 306 (LDTLERLKAVNSSCELSGYLSVAI). A helical transmembrane segment spans residues 307–327 (TLCEFLGLAHCCLNPMLYTFA). Over 328–374 (GVKFRSDLSRLLTKLGCAGPASLCQLFPNWRKSSLSESENATSLTTF) the chain is Cytoplasmic.

It belongs to the G-protein coupled receptor 1 family. As to expression, mainly in spleen, in resting B-cells.

The protein localises to the cell membrane. Its function is as follows. Cytokine receptor that binds to B-lymphocyte chemoattractant (BLC). Involved in B-cell migration into B-cell follicles of spleen and Peyer patches but not into those of mesenteric or peripheral lymph nodes. In Mus musculus (Mouse), this protein is C-X-C chemokine receptor type 5 (Cxcr5).